Consider the following 161-residue polypeptide: PTS system glucose-specific EIIA component (161 aa).

Residues 31–135 (DPVFSKKIVG…SILTPVVISN (105 aa)) enclose the PTS EIIA type-1 domain. Zn(2+) is bound by residues His-68 and His-83. His-83 acts as the Tele-phosphohistidine intermediate; for EIIA activity in catalysis. A Phosphohistidine; by HPr modification is found at His-83.

The cofactor is Zn(2+).

The protein localises to the cytoplasm. Its function is as follows. The phosphoenolpyruvate-dependent sugar phosphotransferase system (sugar PTS), a major carbohydrate active transport system, catalyzes the phosphorylation of incoming sugar substrates concomitantly with their translocation across the cell membrane. The enzyme II complex composed of PtsG and Crr is involved in glucose transport. The protein is PTS system glucose-specific EIIA component (crr) of Buchnera aphidicola subsp. Acyrthosiphon pisum (strain APS) (Acyrthosiphon pisum symbiotic bacterium).